The following is a 669-amino-acid chain: DNA ligase (669 aa).

Residues 31 to 35, 80 to 81, and Glu-112 each bind NAD(+); these read DSVYD and SL. The active-site N6-AMP-lysine intermediate is Lys-114. NAD(+) is bound by residues Arg-135, Glu-172, Lys-289, and Lys-313. The Zn(2+) site is built by Cys-407, Cys-410, Cys-425, and Cys-430. The BRCT domain maps to 591–669; it reads TDSGKLKGKT…EAEFLQLLEP (79 aa).

The protein belongs to the NAD-dependent DNA ligase family. LigA subfamily. Mg(2+) is required as a cofactor. Requires Mn(2+) as cofactor.

The enzyme catalyses NAD(+) + (deoxyribonucleotide)n-3'-hydroxyl + 5'-phospho-(deoxyribonucleotide)m = (deoxyribonucleotide)n+m + AMP + beta-nicotinamide D-nucleotide.. DNA ligase that catalyzes the formation of phosphodiester linkages between 5'-phosphoryl and 3'-hydroxyl groups in double-stranded DNA using NAD as a coenzyme and as the energy source for the reaction. It is essential for DNA replication and repair of damaged DNA. The chain is DNA ligase from Synechocystis sp. (strain ATCC 27184 / PCC 6803 / Kazusa).